Reading from the N-terminus, the 25-residue chain is M-lycotoxin-Hc1a (25 aa).

At Leu-25 the chain carries Leucine amide.

The protein belongs to the cationic peptide 04 (cupiennin) family. 05 subfamily. In terms of tissue distribution, expressed by the venom gland.

It localises to the secreted. It is found in the target cell membrane. Forms pore that permeabilize the cell membrane. Promotes efflux of calcium from synaptosomes, causes hemolysis, and dissipates voltage gradients across muscle membrane. Potently inhibits the growth of bacteria, yeast and Leishmania. Is lethal to lepidopteran larvae. May function both in the prey capture strategy as well as protection from infectious organisms arising from prey ingestion. The polypeptide is M-lycotoxin-Hc1a (Hogna carolinensis (Carolina wolf spider)).